The following is a 246-amino-acid chain: Small ribosomal subunit protein uS2 (246 aa).

The protein belongs to the universal ribosomal protein uS2 family.

The protein is Small ribosomal subunit protein uS2 of Stutzerimonas stutzeri (strain A1501) (Pseudomonas stutzeri).